A 395-amino-acid polypeptide reads, in one-letter code: Calsequestrin-1 (395 aa).

A signal peptide spans 1-28 (MNAADRMGARVALLLLLVLGSPQSGVHG). Y37 carries the phosphotyrosine modification. Phosphoserine is present on S75. The residue at position 118 (T118) is a Phosphothreonine. Position 210 is a phosphoserine (S210). N344 carries an N-linked (GlcNAc...) asparagine glycan. The interval 376 to 395 (EGEINTEDDDDEDDDDDDDD) is disordered.

This sequence belongs to the calsequestrin family. Monomer; increases in response to a depletion of intracellular calcium. Homodimer. Homotetramer and homopolymer. Can form linear homooligomers. Ca(2+) ions promote oligomerization. Interacts (via C-terminal end and preferentially with the monomeric form) with STIM1; this interaction increases in response to a depletion of intracellular calcium, decreases both STIM1 aggregation and clustering, interaction of STIM1 with ORAI1 and store-operated Ca(2+) entry (SOCE) activity. Interacts with ASPH and TRDN. N-glycosylated. In terms of tissue distribution, detected in skeletal muscle (at protein level). Detected in skeletal muscle.

The protein localises to the endoplasmic reticulum. The protein resides in the sarcoplasmic reticulum. It localises to the sarcoplasmic reticulum lumen. Its subcellular location is the mitochondrion matrix. It is found in the sarcoplasmic reticulum membrane. Calsequestrin is a high-capacity, moderate affinity, calcium-binding protein and thus acts as an internal calcium store in muscle. Calcium ions are bound by clusters of acidic residues at the protein surface, often at the interface between subunits. Can bind around 80 Ca(2+) ions. Regulates the release of lumenal Ca(2+) via the calcium release channel RYR1; this plays an important role in triggering muscle contraction. Negatively regulates store-operated Ca(2+) entry (SOCE) activity. The sequence is that of Calsequestrin-1 (CASQ1) from Oryctolagus cuniculus (Rabbit).